Reading from the N-terminus, the 164-residue chain is Thiol peroxidase (164 aa).

The Thioredoxin domain maps to 16 to 162 (LQVGDIAKDF…YEAAINAAKI (147 aa)). Cys-58 acts as the Cysteine sulfenic acid (-SOH) intermediate in catalysis. Residues Cys-58 and Cys-92 are joined by a disulfide bond.

This sequence belongs to the peroxiredoxin family. Tpx subfamily. As to quaternary structure, homodimer.

The catalysed reaction is a hydroperoxide + [thioredoxin]-dithiol = an alcohol + [thioredoxin]-disulfide + H2O. Its function is as follows. Thiol-specific peroxidase that catalyzes the reduction of hydrogen peroxide and organic hydroperoxides to water and alcohols, respectively. Plays a role in cell protection against oxidative stress by detoxifying peroxides. This Streptococcus agalactiae serotype V (strain ATCC BAA-611 / 2603 V/R) protein is Thiol peroxidase.